The following is a 289-amino-acid chain: Bidirectional sugar transporter SWEET15 (289 aa).

Residues 1–10 (MAMAMANHHT) lie on the Extracellular side of the membrane. The chain crosses the membrane as a helical span at residues 11-31 (LGLIFGILGNIISFLVYFAPA). Residues 14 to 100 (IFGILGNIIS…LYFFYAPMQA (87 aa)) form the MtN3/slv 1 domain. The Cytoplasmic portion of the chain corresponds to 32–45 (PTFYRIYKRKSAEG). Residues 46 to 66 (FHSLPYIVALFSAMLWLYYAL) form a helical membrane-spanning segment. The Extracellular portion of the chain corresponds to 67-70 (LKKD). The helical transmembrane segment at 71–91 (AFLLITINSFGCAIESFYILL) threads the bilayer. The Cytoplasmic portion of the chain corresponds to 92 to 106 (YFFYAPMQAKKQTLK). A helical transmembrane segment spans residues 107–127 (VVISLNVGVFSILVVLIQFLL). The Extracellular segment spans residues 128-134 (KGSNRIN). The helical transmembrane segment at 135 to 155 (VFGWICASFSVAVFAAPLSIV) threads the bilayer. The MtN3/slv 2 domain maps to 136–219 (FGWICASFSV…VLYGFYRNAG (84 aa)). Residues 156 to 167 (AKVIRTKSVEFM) are Cytoplasmic-facing. A helical transmembrane segment spans residues 168–188 (PFSLSFFLTLSAIMWFAYGLL). The Extracellular portion of the chain corresponds to 189–193 (KNDPC). A helical membrane pass occupies residues 194-214 (VAIPNILGVILGLVQMVLYGF). Residues 215-289 (YRNAGKEKME…GELQPNGSTV (75 aa)) lie on the Cytoplasmic side of the membrane. The disordered stretch occupies residues 249 to 289 (GAQQNGIKKSGSEDVKDDEETGNREKSTENSGELQPNGSTV). A compositionally biased stretch (polar residues) spans 277–289 (ENSGELQPNGSTV).

It belongs to the SWEET sugar transporter family. As to quaternary structure, forms homooligomers and/or heterooligomers.

The protein localises to the cell membrane. Mediates both low-affinity uptake and efflux of sugar across the plasma membrane. The chain is Bidirectional sugar transporter SWEET15 from Vitis vinifera (Grape).